Consider the following 73-residue polypeptide: Disintegrin cerastin (73 aa).

The 73-residue stretch at glutamate 1–glycine 73 folds into the Disintegrin domain. 6 disulfide bridges follow: cysteine 6–cysteine 21, cysteine 8–cysteine 16, cysteine 15–cysteine 38, cysteine 29–cysteine 35, cysteine 34–cysteine 59, and cysteine 47–cysteine 66. Residues arginine 51–aspartate 53 carry the Cell attachment site motif.

This sequence belongs to the venom metalloproteinase (M12B) family. P-II subfamily. P-IIa sub-subfamily. In terms of assembly, monomer (disintegrin). Expressed by the venom gland.

It is found in the secreted. In terms of biological role, inhibits fibrinogen interaction with platelets. Acts by binding to alpha-IIb/beta-3 (ITGA2B/ITGB3) on the platelet surface and inhibits aggregation induced by ADP, thrombin, platelet-activating factor and collagen. The protein is Disintegrin cerastin of Crotalus cerastes cerastes (Mojave desert sidewinder).